Reading from the N-terminus, the 209-residue chain is Protein GrpE (209 aa).

The span at 1-18 shows a compositional bias: basic and acidic residues; sequence MKIFNKDGNKNSKEDTKA. A disordered region spans residues 1–60; that stretch reads MKIFNKDGNKNSKEDTKAGAENSEAQNSGSSAEEVNKARENPEEASASSEAEKSPEVKCQ. Positions 23–33 are enriched in polar residues; that stretch reads SEAQNSGSSAE. Residues 50 to 60 show a composition bias toward basic and acidic residues; it reads EAEKSPEVKCQ.

Belongs to the GrpE family. Homodimer.

Its subcellular location is the cytoplasm. Its function is as follows. Participates actively in the response to hyperosmotic and heat shock by preventing the aggregation of stress-denatured proteins, in association with DnaK and GrpE. It is the nucleotide exchange factor for DnaK and may function as a thermosensor. Unfolded proteins bind initially to DnaJ; upon interaction with the DnaJ-bound protein, DnaK hydrolyzes its bound ATP, resulting in the formation of a stable complex. GrpE releases ADP from DnaK; ATP binding to DnaK triggers the release of the substrate protein, thus completing the reaction cycle. Several rounds of ATP-dependent interactions between DnaJ, DnaK and GrpE are required for fully efficient folding. This Methanosarcina barkeri (strain Fusaro / DSM 804) protein is Protein GrpE.